The primary structure comprises 387 residues: Early growth response protein 3 (387 aa).

Positions 241–283 (PGFGSLPQPPLTLKPIRPRKYPNRPSKTPLHERPHACPAEGCD) are disordered. Residues 269 to 283 (PLHERPHACPAEGCD) show a composition bias toward basic and acidic residues. C2H2-type zinc fingers lie at residues 275–299 (HACPAEGCDRRFSRSDELTRHLRIH), 305–327 (FQCRICMRSFSRSDHLTTHIRTH), and 333–355 (FACEFCGRKFARSDERKRHAKIH). A disordered region spans residues 348–387 (RKRHAKIHLKQKEKKAEKGGAPSASSAPPVSLAPVVTTCA). The span at 350–360 (RHAKIHLKQKE) shows a compositional bias: basic residues. A compositionally biased stretch (low complexity) spans 368–387 (APSASSAPPVSLAPVVTTCA).

Belongs to the EGR C2H2-type zinc-finger protein family.

The protein resides in the nucleus. Probable transcription factor involved in muscle spindle development. The protein is Early growth response protein 3 (EGR3) of Homo sapiens (Human).